Consider the following 295-residue polypeptide: Probable intramembrane protease C25B8.17 (295 aa).

A helical transmembrane segment spans residues 1–21; sequence MEGVILASSALFTVYIGAKWS. At 22–35 the chain is on the cytoplasmic side; that stretch reads AQEEEPEEKQLINK. A helical membrane pass occupies residues 36–56; sequence RLAVLFPIFGGVTLVLMYLAL. Residues 57 to 63 are Lumenal-facing; the sequence is RYLSKEY. Residues 64–84 traverse the membrane as a helical segment; that stretch reads IQLILQGYASLASIICFVRSF. The Cytoplasmic portion of the chain corresponds to 85–89; that stretch reads NPKTT. The helical transmembrane segment at 90–106 threads the bilayer; sequence FGKITATMSSIAIALFY. Over 107-111 the chain is Lumenal; that stretch reads FKTKH. A helical membrane pass occupies residues 112–130; sequence WMASNILAWALAANSISIM. Residues 131–139 lie on the Cytoplasmic side of the membrane; that stretch reads RIDSYNTGA. A helical transmembrane segment spans residues 140–160; the sequence is LLLGALFFYDIYFVFGTEVMV. Aspartate 149 is a catalytic residue. Residues 161–183 are Lumenal-facing; the sequence is TVATGIDIPAKYVLPQFKNPTRL. Residues 184–204 form a helical membrane-spanning segment; sequence SMLGLGDIVMPGLMLALMYRF. Aspartate 190 is a catalytic residue. Over 205–221 the chain is Cytoplasmic; it reads DLHYYINSTSQPKKHST. Residues 222 to 244 form a helical membrane-spanning segment; the sequence is YFRNTFIAYGLGLGVTNFALYYF. Over 245–249 the chain is Lumenal; that stretch reads KAAQP. The PAL motif lies at 249-251; that stretch reads PAL. The chain crosses the membrane as a helical span at residues 250-268; that stretch reads ALLYLSPACIVAPLLTAWY. At 269–295 the chain is on the cytoplasmic side; the sequence is RDELKTLFSFRSETEDETDEQDKCKST.

Belongs to the peptidase A22B family.

The protein localises to the endoplasmic reticulum membrane. The protein resides in the golgi apparatus membrane. This chain is Probable intramembrane protease C25B8.17, found in Schizosaccharomyces pombe (strain 972 / ATCC 24843) (Fission yeast).